The sequence spans 628 residues: MAAPPLSSWPWASLGSYKYVLYGAVVWKVAEEWRQQGAAPVGSWWLHLLLLFAARGLTYQFWFSYGNMLFFTRRRRVVPDSVDFRQVDAEWDWDNFLLLQTLIGATLVGSPAVARQQLLLPSLKQAWDPRGWAIALLLHVLVAEPLFYWAHRALHRAPLFSRYHAAHHHASVTTPLTAGFGTPLESLLLTVVIGVPLAGAFLMGVGSVGLVYGHVLLFDFLRSMGYSNVEVISPRVFQAVPLLRYLIYTPTYLSLHHREKDSNFCLFMPIFDLLGGTLNHKSWELQKEVYLGKNDQAPDFVFLAHVVDIMASMHVPFVLRSCSSTPFANHFVLLPFWPVAFGFMLLMWCCSKTFLVSSYRLRGNLHQMWTVPRYGFQYFIPAAKKGINEQIELAILRADRMGVKVLSLAALNKNEALNGGGTLFVNKHPELRVRVVHGNTLTAAVILNEIPSNVKDVFLTGATSKLGRAIALYLCRKKIRVLMLTLSSERFLKIQREAPAEFQQYLVQVTKYQPAQNCKTWLVGKWLSPREQRWAPAGTHFHQFVVPPIIGFRRDCTYGKLAAMRLPKDVQGLGYCEYTMERGVVHACHAGGVVHFLEGWEHHEVGAIDVDRIDVVWKAALKHGLTPA.

5 helical membrane passes run 37 to 57 (GAAP…ARGL), 131 to 151 (GWAI…YWAH), 191 to 211 (VVIG…VGLV), 299 to 319 (DFVF…PFVL), and 331 to 351 (FVLL…WCCS). The Fatty acid hydroxylase domain maps to 137–277 (LLHVLVAEPL…MPIFDLLGGT (141 aa)).

The protein belongs to the sterol desaturase family. Homodimer. As to expression, expressed in germinating seeds, radicals and leaves.

The protein localises to the endoplasmic reticulum membrane. The enzyme catalyses a long-chain fatty aldehyde + 2 NADPH + O2 + H(+) = a long-chain alkane + formate + 2 NADP(+) + H2O. Its function is as follows. Aldehyde decarbonylase involved in the conversion of aldehydes to alkanes. Core component of a very-long-chain alkane synthesis complex. Required for the formation of wax layers conferring cuticular permeability and drought tolerance. The chain is Very-long-chain aldehyde decarbonylase GL1-2 from Oryza sativa subsp. japonica (Rice).